A 137-amino-acid polypeptide reads, in one-letter code: MLQPSRRKYRKEQKGRNTGLATRGTKVSFGDFGLKAIARGRLTARQIESARRAMTRHIKRGGRIWIRIFPDKPISKKPAEVRMGNGKGNPEYWVAEIQPGKVLYEMDGVDEALAREAFRLAAAKLPLETVFVTRQVG.

Basic residues predominate over residues 1-13 (MLQPSRRKYRKEQ). Residues 1–22 (MLQPSRRKYRKEQKGRNTGLAT) are disordered.

This sequence belongs to the universal ribosomal protein uL16 family. In terms of assembly, part of the 50S ribosomal subunit.

In terms of biological role, binds 23S rRNA and is also seen to make contacts with the A and possibly P site tRNAs. This chain is Large ribosomal subunit protein uL16, found in Azoarcus sp. (strain BH72).